A 382-amino-acid chain; its full sequence is Hyaluronidase (382 aa).

The or 24 signal peptide spans M1–G28. Residues F29 to T33 constitute a propeptide that is removed on maturation. Cystine bridges form between C54/C345 and C221/C233. The N-linked (GlcNAc...) asparagine glycan is linked to N115. The Proton donor role is filled by E145. N-linked (GlcNAc...) (complex) asparagine glycosylation occurs at N263.

Belongs to the glycosyl hydrolase 56 family. In terms of assembly, homotetramer. Post-translationally, N-glycosylated. Glycans found include a majority of small oligosaccharides (Man1-3GlcNAc2), most of which are either alpha 1,3-monofucosylated or alpha 1,3-(alpha 1,6-)difucosylated at the innermost GlcNAc residue, approximately 5% of high-mannose type structures, and 8% contains the terminal trisaccharide GalNAc beta 1-4[Fuc alpha 1-3]GlcNAc beta 1-in beta 1,2-linkage to the core alpha 1,3-mannosyl residue. Expressed in the venom glands of worker bees. It is also detected in the testes of drones but not in the queen-bee venom glands or in pupae.

Its subcellular location is the secreted. The enzyme catalyses Random hydrolysis of (1-&gt;4)-linkages between N-acetyl-beta-D-glucosamine and D-glucuronate residues in hyaluronate.. Hydrolyzes high molecular weight hyaluronic acid to produce small oligosaccharides. The sequence is that of Hyaluronidase from Apis mellifera (Honeybee).